A 257-amino-acid polypeptide reads, in one-letter code: UPF0246 protein CLL_A2361 (257 aa).

The protein belongs to the UPF0246 family.

This Clostridium botulinum (strain Eklund 17B / Type B) protein is UPF0246 protein CLL_A2361.